The following is a 97-amino-acid chain: MHGKKPSVQDIVLDLKPTTETDLTCYESLDNSEDEDETDSHLERQAEQAWYRIVTDCSRCQSTVCLTIESTHADLLVLEDLLMGALKIVCPNCSRRL.

The E7 terminal domain stretch occupies residues 1-44 (MHGKKPSVQDIVLDLKPTTETDLTCYESLDNSEDEDETDSHLER). The LXCXE motif; interaction with host RB1 and TMEM173/STING motif lies at 23–27 (LTCYE). The segment at 57–93 (CSRCQSTVCLTIESTHADLLVLEDLLMGALKIVCPNC) is a zinc-finger region. Positions 75 to 83 (LLVLEDLLM) match the Nuclear export signal motif.

Belongs to the papillomaviridae E7 protein family. In terms of assembly, homodimer. Homooligomer. Interacts with host RB1; this interaction induces dissociation of RB1-E2F1 complex thereby disrupting RB1 activity. Interacts with host EP300; this interaction represses EP300 transcriptional activity. Interacts with protein E2; this interaction inhibits E7 oncogenic activity. Interacts with host TMEM173/STING; this interaction impairs the ability of TMEM173/STING to sense cytosolic DNA and promote the production of type I interferon (IFN-alpha and IFN-beta). In terms of processing, highly phosphorylated.

It is found in the host cytoplasm. The protein resides in the host nucleus. Plays a role in viral genome replication by driving entry of quiescent cells into the cell cycle. Stimulation of progression from G1 to S phase allows the virus to efficiently use the cellular DNA replicating machinery to achieve viral genome replication. E7 protein has both transforming and trans-activating activities. Induces the disassembly of the E2F1 transcription factor from RB1, with subsequent transcriptional activation of E2F1-regulated S-phase genes. Interferes with host histone deacetylation mediated by HDAC1 and HDAC2, leading to transcription activation. Also plays a role in the inhibition of both antiviral and antiproliferative functions of host interferon alpha. Interaction with host TMEM173/STING impairs the ability of TMEM173/STING to sense cytosolic DNA and promote the production of type I interferon (IFN-alpha and IFN-beta). The polypeptide is Protein E7 (Human papillomavirus type 34).